The sequence spans 138 residues: Basic phospholipase A2 DsM-b1/DsM-b1' (138 aa).

The N-terminal stretch at 1-16 is a signal peptide; it reads MRTLWIVAMCLIGVEG. 7 disulfides stabilise this stretch: Cys-42–Cys-131, Cys-44–Cys-60, Cys-59–Cys-111, Cys-65–Cys-138, Cys-66–Cys-104, Cys-73–Cys-97, and Cys-91–Cys-102. Positions 43, 45, and 47 each coordinate Ca(2+). The active site involves His-63. Asp-64 contributes to the Ca(2+) binding site. Asp-105 is an active-site residue.

The cofactor is Ca(2+). Expressed by the venom gland.

The protein localises to the secreted. The enzyme catalyses a 1,2-diacyl-sn-glycero-3-phosphocholine + H2O = a 1-acyl-sn-glycero-3-phosphocholine + a fatty acid + H(+). Functionally, exhibits high hydrolytic activities and shows strong preference for the anionic micelles (dPPC with deoxycholate) to the zwitterionic micelles (dPPC with Triton X-100). PLA2 catalyzes the calcium-dependent hydrolysis of the 2-acyl groups in 3-sn-phosphoglycerides. The polypeptide is Basic phospholipase A2 DsM-b1/DsM-b1' (Daboia siamensis (Eastern Russel's viper)).